Reading from the N-terminus, the 132-residue chain is ILYEQPSYRGHQYYLWKGEYPDFQRWMGFNDSIRSCRMSPYHQGQYKMRIYERGDFQGQNMEFFEDCPNTYDRFRFRDIHSCNVFDGNWMFYEEPNYRGRQYYLRPGEYRRYSDWGASSARIGSFRRVHHLV.

The region spanning 1 to 40 (ILYEQPSYRGHQYYLWKGEYPDFQRWMGFNDSIRSCRMSP) is the Beta/gamma crystallin 'Greek key' 2 domain. Positions 41-45 (YHQGQ) are connecting peptide. Beta/gamma crystallin 'Greek key' domains follow at residues 46–86 (YKMR…NVFD) and 87–129 (GNWM…RRVH).

This sequence belongs to the beta/gamma-crystallin family. In terms of assembly, monomer.

Its function is as follows. Crystallins are the dominant structural components of the vertebrate eye lens. This is Gamma-crystallin-5 (cryg5) from Xenopus laevis (African clawed frog).